A 717-amino-acid polypeptide reads, in one-letter code: DNA ligase (717 aa).

NAD(+) contacts are provided by residues 44 to 48 (DADYD), 93 to 94 (SL), and Glu127. The active-site N6-AMP-lysine intermediate is Lys129. Residues Arg150, Glu186, Lys302, and Lys326 each coordinate NAD(+). Cys431, Cys434, Cys455, and Cys461 together coordinate Zn(2+). The 79-residue stretch at 639–717 (ATDSPVAGKT…EDEWLALIGG (79 aa)) folds into the BRCT domain.

Belongs to the NAD-dependent DNA ligase family. LigA subfamily. The cofactor is Mg(2+). Mn(2+) serves as cofactor.

It catalyses the reaction NAD(+) + (deoxyribonucleotide)n-3'-hydroxyl + 5'-phospho-(deoxyribonucleotide)m = (deoxyribonucleotide)n+m + AMP + beta-nicotinamide D-nucleotide.. DNA ligase that catalyzes the formation of phosphodiester linkages between 5'-phosphoryl and 3'-hydroxyl groups in double-stranded DNA using NAD as a coenzyme and as the energy source for the reaction. It is essential for DNA replication and repair of damaged DNA. This is DNA ligase from Sinorhizobium medicae (strain WSM419) (Ensifer medicae).